The sequence spans 526 residues: Peptide chain release factor 3 (526 aa).

Residues 9–277 (NKRRTFAIIS…DFVEYAPGPQ (269 aa)) enclose the tr-type G domain. GTP is bound by residues 18–25 (SHPDAGKT), 86–90 (DTPGH), and 140–143 (NKLD).

Belongs to the TRAFAC class translation factor GTPase superfamily. Classic translation factor GTPase family. PrfC subfamily.

Its subcellular location is the cytoplasm. Its function is as follows. Increases the formation of ribosomal termination complexes and stimulates activities of RF-1 and RF-2. It binds guanine nucleotides and has strong preference for UGA stop codons. It may interact directly with the ribosome. The stimulation of RF-1 and RF-2 is significantly reduced by GTP and GDP, but not by GMP. This Legionella pneumophila (strain Lens) protein is Peptide chain release factor 3.